We begin with the raw amino-acid sequence, 399 residues long: Mycinamicin VI 2''-O-methyltransferase (399 aa).

S-adenosyl-L-methionine is bound by residues Thr-173, 202–208, Ser-217, Asp-234, 252–253, and Asp-275; these read EIGVGGY and DQ. Mg(2+) is bound at residue Asp-275. The active-site Proton acceptor is the His-278. Glu-303 and Asp-304 together coordinate Mg(2+).

Belongs to the methyltransferase OleY/MycE family. As to quaternary structure, homotetramer. Requires Mg(2+) as cofactor.

It carries out the reaction mycinamicin VI + S-adenosyl-L-methionine = mycinamicin III + S-adenosyl-L-homocysteine + H(+). Its pathway is antibiotic biosynthesis; mycinamicin biosynthesis. Functionally, O-methyltransferase that catalyzes the conversion of mycinamicin VI to mycinamicin III in the biosynthesis of mycinamicin, a 16-membered macrolide antibiotic. This Micromonospora griseorubida protein is Mycinamicin VI 2''-O-methyltransferase (mycE).